A 70-amino-acid chain; its full sequence is uncharacterized protein (70 aa).

This is an uncharacterized protein from Dictyostelium discoideum (Social amoeba).